The primary structure comprises 352 residues: 4-hydroxy-2-oxovalerate aldolase (352 aa).

Residues 13-265 (VRLTDTSLRD…KTGIDFFDIA (253 aa)) enclose the Pyruvate carboxyltransferase domain. 21–22 (RD) is a binding site for substrate. Aspartate 22 is a binding site for Mn(2+). The active-site Proton acceptor is histidine 25. Residues serine 175 and histidine 204 each contribute to the substrate site. Positions 204 and 206 each coordinate Mn(2+). Tyrosine 295 is a substrate binding site.

Belongs to the 4-hydroxy-2-oxovalerate aldolase family.

The catalysed reaction is (S)-4-hydroxy-2-oxopentanoate = acetaldehyde + pyruvate. The protein is 4-hydroxy-2-oxovalerate aldolase of Mycolicibacterium paratuberculosis (strain ATCC BAA-968 / K-10) (Mycobacterium paratuberculosis).